We begin with the raw amino-acid sequence, 440 residues long: Kinetochore protein NUF2 homolog (440 aa).

Coiled-coil stretches lie at residues 142–239 and 299–386; these read LGLL…LRSQ and INEQ…RQTN.

This sequence belongs to the NUF2 family. Component of the NDC80 complex, which consists of NDC80, NUF2, SPC24 and SPC25.

The protein resides in the chromosome. Its subcellular location is the centromere. Functionally, acts as a component of the essential kinetochore-associated NDC80 complex, which is required for chromosome segregation and spindle checkpoint activity to ensure proper cell division. This is Kinetochore protein NUF2 homolog from Arabidopsis thaliana (Mouse-ear cress).